The following is a 477-amino-acid chain: Beta-agarase D (477 aa).

Residues 1 to 20 (MKRSILLAIIAFLQFFTSYG) form the signal peptide. The 357-residue stretch at 22-378 (YDWDNVPIPA…WIRVYKPVNA (357 aa)) folds into the GH16 domain. Substrate contacts are provided by residues 94-104 (MQNHVAVSGGN), 123-125 (NNT), Glu174, Glu179, Arg206, and Glu340. The active-site Nucleophile is the Glu174. Glu179 acts as the Proton donor in catalysis. Residues 382–391 (NSAETTSTVE) are compositionally biased toward low complexity. Residues 382-402 (NSAETTSTVEKPASFEPQGQP) are disordered.

The protein belongs to the glycosyl hydrolase 16 family.

The protein localises to the secreted. It catalyses the reaction Hydrolysis of (1-&gt;4)-beta-D-galactosidic linkages in agarose, giving the tetramer as the predominant product.. Cleaves the beta-1,4-linkages between beta-D-galactose and alpha-L-3,6-anhydro-galactose residues in agarose. Cleaves agarose in a random manner with retention of the anomeric-bond configuration, producing beta-anomers that give rise progressively to alpha-anomers when mutarotation takes place. Requires at least 4 consecutive agarose units and is highly intolerant to modifications. This Zobellia galactanivorans (strain DSM 12802 / CCUG 47099 / CIP 106680 / NCIMB 13871 / Dsij) protein is Beta-agarase D (agaD).